The chain runs to 356 residues: Peritrophin-44 (356 aa).

An N-terminal signal peptide occupies residues 1–23 (MKELQITTGCLLLMVAAIGKTSA). 5 Chitin-binding type-2 domains span residues 28–85 (SETC…KCIS), 88–146 (KNAC…ECTA), 147–201 (DSIC…PCLA), 220–283 (NFVC…PCTF), and 286–355 (CGNL…YKLC). C62 and C75 are joined by a disulfide. N114 carries N-linked (GlcNAc...) asparagine glycosylation. 3 disulfides stabilise this stretch: C122-C135, C181-C193, and C262-C273. N-linked (GlcNAc...) asparagine glycosylation occurs at N309.

In terms of processing, glycosylated. In terms of tissue distribution, larval peritrophic membrane.

Its function is as follows. May have roles in the maintenance of peritrophic membrane structure and in the determination of the porosity of the peritrophic membrane. May bind chitin or related oligosaccharide structures. This chain is Peritrophin-44, found in Lucilia cuprina (Green bottle fly).